A 174-amino-acid polypeptide reads, in one-letter code: NADH-quinone oxidoreductase subunit I (174 aa).

2 consecutive 4Fe-4S ferredoxin-type domains span residues 44 to 74 (LNRY…VEGD) and 90 to 119 (RVYQ…MTND). Residues cysteine 54, cysteine 57, cysteine 60, cysteine 64, cysteine 99, cysteine 102, cysteine 105, and cysteine 109 each contribute to the [4Fe-4S] cluster site.

Belongs to the complex I 23 kDa subunit family. NDH-1 is composed of 14 different subunits. Subunits NuoA, H, J, K, L, M, N constitute the membrane sector of the complex. [4Fe-4S] cluster serves as cofactor.

The protein localises to the cell membrane. The enzyme catalyses a quinone + NADH + 5 H(+)(in) = a quinol + NAD(+) + 4 H(+)(out). Functionally, NDH-1 shuttles electrons from NADH, via FMN and iron-sulfur (Fe-S) centers, to quinones in the respiratory chain. The immediate electron acceptor for the enzyme in this species is believed to be menaquinone. Couples the redox reaction to proton translocation (for every two electrons transferred, four hydrogen ions are translocated across the cytoplasmic membrane), and thus conserves the redox energy in a proton gradient. The polypeptide is NADH-quinone oxidoreductase subunit I (Mycobacterium sp. (strain JLS)).